The primary structure comprises 1551 residues: Serine/threonine-protein kinase MRCK gamma (1551 aa).

Residues 71–337 (FEILKVIGRG…LDDFRNHPFF (267 aa)) enclose the Protein kinase domain. Residues 77 to 85 (IGRGAFGEV) and K100 contribute to the ATP site. D195 (proton acceptor) is an active-site residue. Phosphoserine; by autocatalysis is present on residues S216 and S228. At T234 the chain carries Phosphothreonine; by autocatalysis. An AGC-kinase C-terminal domain is found at 338–408 (EGVDWERLAS…TSGSHSPESS (71 aa)). Coiled coils occupy residues 406–678 (ESSS…SNWE) and 730–802 (KARR…RARG). Disordered stretches follow at residues 467-486 (KASL…QDSD), 655-675 (ELAQ…ETES), 801-849 (RGPV…PEGR), and 863-886 (TANT…PRSF). Residues 655 to 674 (ELAQEQESKQRLEGERRETE) show a composition bias toward basic and acidic residues. Positions 835-849 (ATRHGGEPDLRPEGR) are enriched in basic and acidic residues. The segment at 878–927 (SHTLRPRSFPSPTKCLRCTSLMLGLGRQGLGCDACGYFCHTTCAPQAPPC) adopts a Phorbol-ester/DAG-type zinc-finger fold. The 120-residue stretch at 947-1066 (GTAYEGFLSV…WLQVLGELQR (120 aa)) folds into the PH domain. The CNH domain maps to 1092–1366 (LPHTLCAAIL…RPLNPEGSLF (275 aa)). The 14-residue stretch at 1437–1450 (ISPPTNFNHLVHVG) folds into the CRIB domain. Positions 1442 to 1551 (NFNHLVHVGP…PLSPELESSP (110 aa)) are disordered. Residues 1457-1470 (GARDKSPAPEEKGR) are compositionally biased toward basic and acidic residues. The residue at position 1482 (S1482) is a Phosphoserine. The span at 1511–1533 (TSLSSESVSCPQGSLSPATSLMQ) shows a compositional bias: polar residues. A compositionally biased stretch (low complexity) spans 1540–1551 (SLPLSPELESSP).

Belongs to the protein kinase superfamily. AGC Ser/Thr protein kinase family. DMPK subfamily. In terms of assembly, homodimer and homotetramer via the coiled coil regions. Interacts tightly with GTP-bound but not GDP-bound CDC42. Mg(2+) is required as a cofactor. Expressed in heart and skeletal muscle.

It is found in the cytoplasm. The enzyme catalyses L-seryl-[protein] + ATP = O-phospho-L-seryl-[protein] + ADP + H(+). It catalyses the reaction L-threonyl-[protein] + ATP = O-phospho-L-threonyl-[protein] + ADP + H(+). Maintained in an inactive, closed conformation by an interaction between the kinase domain and the negative autoregulatory C-terminal coiled-coil region. Agonist binding to the phorbol ester binding site disrupts this, releasing the kinase domain to allow N-terminus-mediated dimerization and kinase activation by transautophosphorylation. In terms of biological role, may act as a downstream effector of CDC42 in cytoskeletal reorganization. Contributes to the actomyosin contractility required for cell invasion, through the regulation of MYPT1 and thus MLC2 phosphorylation. The chain is Serine/threonine-protein kinase MRCK gamma from Homo sapiens (Human).